The sequence spans 274 residues: Pyrroline-5-carboxylate reductase 3 (274 aa).

This sequence belongs to the pyrroline-5-carboxylate reductase family. As to quaternary structure, homodecamer; composed of 5 homodimers.

It localises to the cytoplasm. It catalyses the reaction L-proline + NADP(+) = (S)-1-pyrroline-5-carboxylate + NADPH + 2 H(+). The enzyme catalyses L-proline + NAD(+) = (S)-1-pyrroline-5-carboxylate + NADH + 2 H(+). It functions in the pathway amino-acid biosynthesis; L-proline biosynthesis; L-proline from L-glutamate 5-semialdehyde: step 1/1. Functionally, oxidoreductase that catalyzes the last step in proline biosynthesis, which corresponds to the reduction of pyrroline-5-carboxylate (P5C) to L-proline using NAD(P)H. Proline is synthesized from either glutamate or ornithine; both are converted to P5C, and then to proline via pyrroline-5-carboxylate reductases (PYCRs). PYCR3 is exclusively linked to the biosynthesis of proline from ornithine. The polypeptide is Pyrroline-5-carboxylate reductase 3 (Xenopus laevis (African clawed frog)).